The following is an 86-amino-acid chain: Putative sodium channel toxin Ts17 (86 aa).

A signal peptide spans 1-19; that stretch reads MNYFIFLVVACLLTAGTEG. The region spanning 21-82 is the LCN-type CS-alpha/beta domain; the sequence is KDGYPVEGDN…EPTKTSGRCK (62 aa). 4 cysteine pairs are disulfide-bonded: C31–C81, C35–C57, C43–C64, and C47–C66. A Proline amide modification is found at P83.

It belongs to the long (4 C-C) scorpion toxin superfamily. Sodium channel inhibitor family. Alpha subfamily. As to expression, expressed by the venom gland.

The protein resides in the secreted. In terms of biological role, alpha toxins bind voltage-independently at site-3 of sodium channels (Nav) and inhibit the inactivation of the activated channels, thereby blocking neuronal transmission. In Tityus serrulatus (Brazilian scorpion), this protein is Putative sodium channel toxin Ts17.